The chain runs to 450 residues: tRNA-2-methylthio-N(6)-dimethylallyladenosine synthase (450 aa).

The MTTase N-terminal domain occupies 14–132 (GEFFIETWGC…FPNYLNEVKK (119 aa)). [4Fe-4S] cluster-binding residues include C23, C59, C93, C169, C173, and C176. The 231-residue stretch at 155 to 385 (RKNSMKAFVT…VEVVNEISAK (231 aa)) folds into the Radical SAM core domain. A TRAM domain is found at 388-450 (KAYEGKIEEV…NSFSLTGEEI (63 aa)).

The protein belongs to the methylthiotransferase family. MiaB subfamily. In terms of assembly, monomer. [4Fe-4S] cluster is required as a cofactor.

The protein localises to the cytoplasm. The catalysed reaction is N(6)-dimethylallyladenosine(37) in tRNA + (sulfur carrier)-SH + AH2 + 2 S-adenosyl-L-methionine = 2-methylsulfanyl-N(6)-dimethylallyladenosine(37) in tRNA + (sulfur carrier)-H + 5'-deoxyadenosine + L-methionine + A + S-adenosyl-L-homocysteine + 2 H(+). In terms of biological role, catalyzes the methylthiolation of N6-(dimethylallyl)adenosine (i(6)A), leading to the formation of 2-methylthio-N6-(dimethylallyl)adenosine (ms(2)i(6)A) at position 37 in tRNAs that read codons beginning with uridine. This is tRNA-2-methylthio-N(6)-dimethylallyladenosine synthase from Clostridium botulinum (strain Langeland / NCTC 10281 / Type F).